The primary structure comprises 237 residues: UDP-2,3-diacylglucosamine hydrolase (237 aa).

Mn(2+) is bound by residues D9, H11, D42, N80, and H115. Substrate is bound at residue N80–R81. Substrate is bound by residues D123, S161, K165, K168, and H196. Residues H196 and H198 each contribute to the Mn(2+) site.

Belongs to the LpxH family. Mn(2+) serves as cofactor.

It is found in the cell inner membrane. Its subcellular location is the cytoplasm. It carries out the reaction UDP-2-N,3-O-bis[(3R)-3-hydroxytetradecanoyl]-alpha-D-glucosamine + H2O = 2-N,3-O-bis[(3R)-3-hydroxytetradecanoyl]-alpha-D-glucosaminyl 1-phosphate + UMP + 2 H(+). It participates in glycolipid biosynthesis; lipid IV(A) biosynthesis; lipid IV(A) from (3R)-3-hydroxytetradecanoyl-[acyl-carrier-protein] and UDP-N-acetyl-alpha-D-glucosamine: step 4/6. Functionally, hydrolyzes the pyrophosphate bond of UDP-2,3-diacylglucosamine to yield 2,3-diacylglucosamine 1-phosphate (lipid X) and UMP by catalyzing the attack of water at the alpha-P atom. Involved in the biosynthesis of lipid A, a phosphorylated glycolipid that anchors the lipopolysaccharide to the outer membrane of the cell. The polypeptide is UDP-2,3-diacylglucosamine hydrolase (Haemophilus influenzae (strain ATCC 51907 / DSM 11121 / KW20 / Rd)).